Consider the following 413-residue polypeptide: Arginine biosynthesis bifunctional protein ArgJ (413 aa).

Residues Thr160, Lys186, Thr197, Glu284, Asn408, and Ser413 each contribute to the substrate site. Catalysis depends on Thr197, which acts as the Nucleophile.

It belongs to the ArgJ family. As to quaternary structure, heterotetramer of two alpha and two beta chains.

It is found in the cytoplasm. It catalyses the reaction N(2)-acetyl-L-ornithine + L-glutamate = N-acetyl-L-glutamate + L-ornithine. The catalysed reaction is L-glutamate + acetyl-CoA = N-acetyl-L-glutamate + CoA + H(+). Its pathway is amino-acid biosynthesis; L-arginine biosynthesis; L-ornithine and N-acetyl-L-glutamate from L-glutamate and N(2)-acetyl-L-ornithine (cyclic): step 1/1. The protein operates within amino-acid biosynthesis; L-arginine biosynthesis; N(2)-acetyl-L-ornithine from L-glutamate: step 1/4. In terms of biological role, catalyzes two activities which are involved in the cyclic version of arginine biosynthesis: the synthesis of N-acetylglutamate from glutamate and acetyl-CoA as the acetyl donor, and of ornithine by transacetylation between N(2)-acetylornithine and glutamate. This is Arginine biosynthesis bifunctional protein ArgJ from Burkholderia pseudomallei (strain K96243).